A 343-amino-acid polypeptide reads, in one-letter code: Aspartate carbamoyltransferase catalytic subunit (343 aa).

Carbamoyl phosphate-binding residues include Arg-54 and Thr-55. Lys-82 is an L-aspartate binding site. 3 residues coordinate carbamoyl phosphate: Arg-104, His-134, and Gln-137. Residues Arg-177 and Arg-232 each coordinate L-aspartate. Carbamoyl phosphate contacts are provided by Gly-277 and Pro-278. Positions Pro-323 to Arg-343 are disordered.

This sequence belongs to the aspartate/ornithine carbamoyltransferase superfamily. ATCase family. Heterododecamer (2C3:3R2) of six catalytic PyrB chains organized as two trimers (C3), and six regulatory PyrI chains organized as three dimers (R2).

The enzyme catalyses carbamoyl phosphate + L-aspartate = N-carbamoyl-L-aspartate + phosphate + H(+). The protein operates within pyrimidine metabolism; UMP biosynthesis via de novo pathway; (S)-dihydroorotate from bicarbonate: step 2/3. Functionally, catalyzes the condensation of carbamoyl phosphate and aspartate to form carbamoyl aspartate and inorganic phosphate, the committed step in the de novo pyrimidine nucleotide biosynthesis pathway. The chain is Aspartate carbamoyltransferase catalytic subunit from Renibacterium salmoninarum (strain ATCC 33209 / DSM 20767 / JCM 11484 / NBRC 15589 / NCIMB 2235).